The primary structure comprises 123 residues: Small ribosomal subunit protein uS12 (123 aa).

Residues 11–32 are disordered; the sequence is PRQEKTYREKARHLGASPQKRG. 3-methylthioaspartic acid is present on D89.

This sequence belongs to the universal ribosomal protein uS12 family. Part of the 30S ribosomal subunit. Contacts proteins S8 and S17. May interact with IF1 in the 30S initiation complex.

With S4 and S5 plays an important role in translational accuracy. Functionally, interacts with and stabilizes bases of the 16S rRNA that are involved in tRNA selection in the A site and with the mRNA backbone. Located at the interface of the 30S and 50S subunits, it traverses the body of the 30S subunit contacting proteins on the other side and probably holding the rRNA structure together. The combined cluster of proteins S8, S12 and S17 appears to hold together the shoulder and platform of the 30S subunit. The sequence is that of Small ribosomal subunit protein uS12 from Methylocella silvestris (strain DSM 15510 / CIP 108128 / LMG 27833 / NCIMB 13906 / BL2).